The chain runs to 605 residues: Terpenoid synthase 18 (605 aa).

Mg(2+) is bound by residues Asp-356, Asp-360, Asn-500, Thr-504, and Glu-508. The DDXXD motif signature appears at 356–360 (DDTYD).

This sequence belongs to the terpene synthase family. Tpsa subfamily. Requires Mg(2+) as cofactor. It depends on Mn(2+) as a cofactor. As to expression, predominantly expressed in flowers and siliques but also in roots and leaves.

Its subcellular location is the cytoplasm. It participates in secondary metabolite biosynthesis; terpenoid biosynthesis. The protein is Terpenoid synthase 18 (TPS18) of Arabidopsis thaliana (Mouse-ear cress).